The sequence spans 506 residues: uncharacterized protein (506 aa).

282–289 (GIQGTGKS) serves as a coordination point for ATP.

It belongs to the AAA ATPase family. Highly divergent.

The protein localises to the plastid. Its subcellular location is the chloroplast. This is an uncharacterized protein from Guillardia theta (Cryptophyte).